A 130-amino-acid chain; its full sequence is Small ribosomal subunit protein uS11c (130 aa).

It belongs to the universal ribosomal protein uS11 family. In terms of assembly, part of the 30S ribosomal subunit.

The protein localises to the plastid. It localises to the chloroplast. The sequence is that of Small ribosomal subunit protein uS11c from Oedogonium cardiacum (Filamentous green alga).